Here is a 524-residue protein sequence, read N- to C-terminus: Probable pectinesterase/pectinesterase inhibitor 42 (524 aa).

Positions 1-22 (MLVKVFSFFILMITMVVIGVSK) are cleaved as a signal peptide. The pectinesterase inhibitor 42 stretch occupies residues 23–172 (EYCDDKHSCQ…ISKAKVALAL (150 aa)). The segment at 215-510 (DVVVAKDGTG…FTVAKLLDGE (296 aa)) is pectinesterase 42. N-linked (GlcNAc...) asparagine glycosylation is found at Asn-265 and Asn-281. Thr-290 contributes to the substrate binding site. The active-site Proton donor; for pectinesterase activity is the Asp-343. Cys-357 and Cys-377 are disulfide-bonded. Asp-364 functions as the Nucleophile; for pectinesterase activity in the catalytic mechanism. An N-linked (GlcNAc...) asparagine glycan is attached at Asn-412. Residues Arg-430 and Trp-432 each contribute to the substrate site.

In the N-terminal section; belongs to the PMEI family. This sequence in the C-terminal section; belongs to the pectinesterase family. Expressed in siliques but not in flower buds.

The protein resides in the secreted. It is found in the cell wall. The enzyme catalyses [(1-&gt;4)-alpha-D-galacturonosyl methyl ester](n) + n H2O = [(1-&gt;4)-alpha-D-galacturonosyl](n) + n methanol + n H(+). Its pathway is glycan metabolism; pectin degradation; 2-dehydro-3-deoxy-D-gluconate from pectin: step 1/5. Its function is as follows. Acts in the modification of cell walls via demethylesterification of cell wall pectin. This Arabidopsis thaliana (Mouse-ear cress) protein is Probable pectinesterase/pectinesterase inhibitor 42 (PME42).